The following is a 70-amino-acid chain: Large ribosomal subunit protein bL31 (70 aa).

Zn(2+) is bound by residues cysteine 16, cysteine 18, cysteine 37, and cysteine 40.

The protein belongs to the bacterial ribosomal protein bL31 family. Type A subfamily. Part of the 50S ribosomal subunit. It depends on Zn(2+) as a cofactor.

Functionally, binds the 23S rRNA. The chain is Large ribosomal subunit protein bL31 from Cronobacter sakazakii (strain ATCC BAA-894) (Enterobacter sakazakii).